A 459-amino-acid chain; its full sequence is Cysteine--tRNA ligase (459 aa).

Cys31 contributes to the Zn(2+) binding site. A 'HIGH' region motif is present at residues 33-43 (PTVYYNPHIGN). The Zn(2+) site is built by Cys216, His241, and Glu245. A 'KMSKS' region motif is present at residues 274–278 (KMSKS). Lys277 contacts ATP.

It belongs to the class-I aminoacyl-tRNA synthetase family. In terms of assembly, monomer. Zn(2+) is required as a cofactor.

Its subcellular location is the cytoplasm. It carries out the reaction tRNA(Cys) + L-cysteine + ATP = L-cysteinyl-tRNA(Cys) + AMP + diphosphate. The sequence is that of Cysteine--tRNA ligase from Rickettsia africae (strain ESF-5).